The primary structure comprises 465 residues: Kynurenine 3-monooxygenase (465 aa).

The segment at 1 to 26 (MSPGIVSQEVNGRQEPTEAARDERHG) is disordered. Residues 15-25 (EPTEAARDERH) show a composition bias toward basic and acidic residues. The next 2 helical transmembrane spans lie at 405 to 427 (LLFR…SMPY) and 440 to 462 (LLKR…IYAQ).

It belongs to the aromatic-ring hydroxylase family. KMO subfamily. FAD is required as a cofactor.

It is found in the mitochondrion. The protein resides in the membrane. It catalyses the reaction L-kynurenine + NADPH + O2 + H(+) = 3-hydroxy-L-kynurenine + NADP(+) + H2O. It functions in the pathway cofactor biosynthesis; NAD(+) biosynthesis; quinolinate from L-kynurenine: step 1/3. In terms of biological role, catalyzes the hydroxylation of L-kynurenine (L-Kyn) to form 3-hydroxy-L-kynurenine (L-3OHKyn). Required for synthesis of quinolinic acid. In Drosophila melanogaster (Fruit fly), this protein is Kynurenine 3-monooxygenase.